A 380-amino-acid chain; its full sequence is 1-deoxy-D-xylulose 5-phosphate reductoisomerase (380 aa).

8 residues coordinate NADPH: Ser-10, Gly-11, Ser-12, Ile-13, Gly-36, Lys-37, Asn-38, and Asn-120. Position 121 (Lys-121) interacts with 1-deoxy-D-xylulose 5-phosphate. Glu-122 lines the NADPH pocket. Asp-146 contributes to the Mn(2+) binding site. Positions 147, 148, 172, and 195 each coordinate 1-deoxy-D-xylulose 5-phosphate. Residue Glu-148 coordinates Mn(2+). Gly-201 serves as a coordination point for NADPH. Residues Ser-208, Asn-213, Lys-214, and Glu-217 each contribute to the 1-deoxy-D-xylulose 5-phosphate site. Residue Glu-217 coordinates Mn(2+).

The protein belongs to the DXR family. Mg(2+) is required as a cofactor. Mn(2+) serves as cofactor.

It carries out the reaction 2-C-methyl-D-erythritol 4-phosphate + NADP(+) = 1-deoxy-D-xylulose 5-phosphate + NADPH + H(+). It participates in isoprenoid biosynthesis; isopentenyl diphosphate biosynthesis via DXP pathway; isopentenyl diphosphate from 1-deoxy-D-xylulose 5-phosphate: step 1/6. Functionally, catalyzes the NADPH-dependent rearrangement and reduction of 1-deoxy-D-xylulose-5-phosphate (DXP) to 2-C-methyl-D-erythritol 4-phosphate (MEP). The protein is 1-deoxy-D-xylulose 5-phosphate reductoisomerase of Bacillus cereus (strain AH187).